The primary structure comprises 842 residues: Leucine--tRNA ligase (842 aa).

The 'HIGH' region motif lies at 44-55; sequence PYPSANGLHVGH. Positions 619 to 623 match the 'KMSKS' region motif; that stretch reads KMSKS. Lys-622 contributes to the ATP binding site.

Belongs to the class-I aminoacyl-tRNA synthetase family.

Its subcellular location is the cytoplasm. The enzyme catalyses tRNA(Leu) + L-leucine + ATP = L-leucyl-tRNA(Leu) + AMP + diphosphate. This Borrelia turicatae (strain 91E135) protein is Leucine--tRNA ligase.